Here is a 202-residue protein sequence, read N- to C-terminus: LexA repressor 2 (202 aa).

Positions 28 to 48 (LAEISEAFGFASRSVARKHIV) form a DNA-binding region, H-T-H motif. Active-site for autocatalytic cleavage activity residues include serine 123 and lysine 160.

This sequence belongs to the peptidase S24 family. In terms of assembly, homodimer.

The enzyme catalyses Hydrolysis of Ala-|-Gly bond in repressor LexA.. Its function is as follows. Represses a number of genes involved in the response to DNA damage (SOS response), including recA and lexA. In the presence of single-stranded DNA, RecA interacts with LexA causing an autocatalytic cleavage which disrupts the DNA-binding part of LexA, leading to derepression of the SOS regulon and eventually DNA repair. This chain is LexA repressor 2, found in Pseudomonas syringae pv. tomato (strain ATCC BAA-871 / DC3000).